The following is a 590-amino-acid chain: Methionine--tRNA ligase, mitochondrial (590 aa).

Residues 1–26 constitute a mitochondrion transit peptide; sequence MRTRFLFLTSGCKAVPELHKIVLANA. A 'HIGH' region motif is present at residues 51-61; the sequence is FYVNASPHLGH. The 'KMSKS' region signature appears at 342–346; that stretch reads KMSKS. ATP is bound at residue lysine 345. Positions 570–590 are disordered; that stretch reads LESQRADQQKNRKMEKGSNLK. The span at 571–590 shows a compositional bias: basic and acidic residues; that stretch reads ESQRADQQKNRKMEKGSNLK.

It belongs to the class-I aminoacyl-tRNA synthetase family.

It localises to the mitochondrion matrix. It catalyses the reaction tRNA(Met) + L-methionine + ATP = L-methionyl-tRNA(Met) + AMP + diphosphate. The sequence is that of Methionine--tRNA ligase, mitochondrial (mars2) from Takifugu rubripes (Japanese pufferfish).